Reading from the N-terminus, the 189-residue chain is Large ribosomal subunit protein bL9 (189 aa).

It belongs to the bacterial ribosomal protein bL9 family.

In terms of biological role, binds to the 23S rRNA. The polypeptide is Large ribosomal subunit protein bL9 (Brucella melitensis biotype 2 (strain ATCC 23457)).